The following is a 102-amino-acid chain: Acid shock protein (102 aa).

The first 21 residues, 1 to 21 (MKKVLALVVAAAMGLSSAAFA), serve as a signal peptide directing secretion. Residues 21-41 (AAETTTTPAPTATTTKAAPAK) show a composition bias toward low complexity. The segment at 21 to 102 (AAETTTTPAP…PAKPAAQPAA (82 aa)) is disordered. The propeptide occupies 22–58 (AETTTTPAPTATTTKAAPAKTTHHKKQHKAAPAQKAQ). The segment covering 80–90 (AAKKHAKKHSH) has biased composition (basic residues). Residues 91-102 (QQPAKPAAQPAA) are compositionally biased toward low complexity.

Belongs to the Asr family. In terms of processing, proteolytic processing gives rise to the active protein.

The protein localises to the periplasm. Functionally, required for growth and/or survival at acidic conditions. This chain is Acid shock protein, found in Escherichia coli (strain K12 / MC4100 / BW2952).